The sequence spans 392 residues: Formate-dependent phosphoribosylglycinamide formyltransferase (392 aa).

N(1)-(5-phospho-beta-D-ribosyl)glycinamide is bound by residues 22-23 (EL) and Glu82. ATP is bound by residues Arg114, Lys155, 160–165 (SSGKGQ), 195–198 (EGVV), and Glu203. One can recognise an ATP-grasp domain in the interval 119–308 (RLAAEELQLP…EFALHVRAFL (190 aa)). Mg(2+) is bound by residues Glu267 and Glu279. N(1)-(5-phospho-beta-D-ribosyl)glycinamide is bound by residues Asp286, Lys355, and 362–363 (RR).

It belongs to the PurK/PurT family. Homodimer.

The catalysed reaction is N(1)-(5-phospho-beta-D-ribosyl)glycinamide + formate + ATP = N(2)-formyl-N(1)-(5-phospho-beta-D-ribosyl)glycinamide + ADP + phosphate + H(+). The protein operates within purine metabolism; IMP biosynthesis via de novo pathway; N(2)-formyl-N(1)-(5-phospho-D-ribosyl)glycinamide from N(1)-(5-phospho-D-ribosyl)glycinamide (formate route): step 1/1. Functionally, involved in the de novo purine biosynthesis. Catalyzes the transfer of formate to 5-phospho-ribosyl-glycinamide (GAR), producing 5-phospho-ribosyl-N-formylglycinamide (FGAR). Formate is provided by PurU via hydrolysis of 10-formyl-tetrahydrofolate. This Escherichia coli O157:H7 protein is Formate-dependent phosphoribosylglycinamide formyltransferase.